We begin with the raw amino-acid sequence, 87 residues long: Omega-lycotoxin-Am1a (87 aa).

An N-terminal signal peptide occupies residues 1–17; sequence MKLSIFFVLFFIAIAYC. A propeptide spanning residues 18–40 is cleaved from the precursor; sequence QPEFLDDEEDEVEETLPVAEEGR. 4 cysteine pairs are disulfide-bonded: Cys44–Cys59, Cys51–Cys64, Cys58–Cys84, and Cys66–Cys82.

It belongs to the neurotoxin omega-lctx family. As to expression, expressed by the venom gland.

It localises to the secreted. Functionally, modulates Cav2.1/CACNA1A voltage-gated calcium channels (P/Q-type currents) in rat cerebellar Purkinje cells and hippocampal CA1-CA3 neurons. At saturating concentrations (&gt;10 nM) decelerates activation kinetics and slightly increases peak amplitude without affecting deactivation kinetics. In vivo, does not cause death when intravenously injected into mice. In rat models, through its activity on Cav2.1/CACNA1A, has an ameliorative effect on memory defects provoked by hyperstimulation of N-methyl-D-aspartate receptors (NMDARs) in the hippocampus. The protein is Omega-lycotoxin-Am1a of Alopecosa marikovskyi (Wolf spider).